The primary structure comprises 369 residues: Protein RecA (369 aa).

Residue 66 to 73 (GPESSGKT) coordinates ATP. Residues 328–369 (GIDAESLEEKEDPEKVKEQRAKKAAPGEEKPAEPASPEKTDK) form a disordered region. The segment covering 339-369 (DPEKVKEQRAKKAAPGEEKPAEPASPEKTDK) has biased composition (basic and acidic residues).

It belongs to the RecA family.

Its subcellular location is the cytoplasm. Its function is as follows. Can catalyze the hydrolysis of ATP in the presence of single-stranded DNA, the ATP-dependent uptake of single-stranded DNA by duplex DNA, and the ATP-dependent hybridization of homologous single-stranded DNAs. It interacts with LexA causing its activation and leading to its autocatalytic cleavage. This is Protein RecA from Lactobacillus delbrueckii subsp. bulgaricus (strain ATCC BAA-365 / Lb-18).